The chain runs to 238 residues: MNNQNVDQNEIAKFEALASRWWDPTSEFKPLHDINPLRLNYIDERVSLAGKRALDVGCGGGLLSEGMALRGAHVTGIDMGEAPLSVAKLHGLESGVKVDYRQTTIEELARDPEHAGQYDVVTCLEMLEHVPDPASVIRACASMLKPGGHMFVSTINRNPKSFLFAIVGAEYVLNLLPKGTHEWKKFIRPSEMSDHLRHAGLEVRELTGMTYNPITKVYKLGRDVDVNYLMHARDTRED.

Positions 38, 57, 78, and 124 each coordinate S-adenosyl-L-methionine.

It belongs to the methyltransferase superfamily. UbiG/COQ3 family.

It catalyses the reaction a 3-demethylubiquinol + S-adenosyl-L-methionine = a ubiquinol + S-adenosyl-L-homocysteine + H(+). It carries out the reaction a 3-(all-trans-polyprenyl)benzene-1,2-diol + S-adenosyl-L-methionine = a 2-methoxy-6-(all-trans-polyprenyl)phenol + S-adenosyl-L-homocysteine + H(+). It functions in the pathway cofactor biosynthesis; ubiquinone biosynthesis. Its function is as follows. O-methyltransferase that catalyzes the 2 O-methylation steps in the ubiquinone biosynthetic pathway. The protein is Ubiquinone biosynthesis O-methyltransferase of Marinobacter nauticus (strain ATCC 700491 / DSM 11845 / VT8) (Marinobacter aquaeolei).